The chain runs to 734 residues: Sulfate transporter (734 aa).

Residues M1 to L11 are compositionally biased toward polar residues. Positions M1–R38 are disordered. Phosphoserine occurs at positions 12 and 16. Transmembrane regions (helical) follow at residues M113–L133 and P138–S158. N-linked (GlcNAc...) asparagine glycans are attached at residues N194 and N204. The next 8 helical transmembrane spans lie at F222–Y242, L247–L267, G269–F289, I292–P312, V379–F399, A415–L435, V453–L473, and L519–L539. An STAS domain is found at A563 to A714.

The protein belongs to the SLC26A/SulP transporter (TC 2.A.53) family. In terms of processing, N-glycosylated.

The protein resides in the cell membrane. It is found in the apical cell membrane. It catalyses the reaction oxalate(in) + sulfate(out) = oxalate(out) + sulfate(in). The enzyme catalyses sulfate(out) + 2 chloride(in) = sulfate(in) + 2 chloride(out). It carries out the reaction oxalate(out) + 2 chloride(in) = oxalate(in) + 2 chloride(out). The catalysed reaction is bromide(in) + chloride(out) = bromide(out) + chloride(in). It catalyses the reaction nitrate(in) + chloride(out) = nitrate(out) + chloride(in). The enzyme catalyses iodide(in) + chloride(out) = iodide(out) + chloride(in). In terms of biological role, sulfate transporter which mediates sulfate uptake into chondrocytes in order to maintain adequate sulfation of proteoglycans which is needed for cartilage development. Mediates electroneutral anion exchange of sulfate ions for oxalate ions, sulfate and oxalate ions for chloride and/or hydroxyl ions and chloride ions for bromide, iodide and nitrate ions. The coupling of sulfate transport to both hydroxyl and chloride ions likely serves to ensure transport at both acidic pH when most sulfate uptake is mediated by sulfate-hydroxide exchange and alkaline pH when most sulfate uptake is mediated by sulfate-chloride exchange. Essential for chondrocyte proliferation, differentiation and cell size expansion. The sequence is that of Sulfate transporter (SLC26A2) from Ovis aries (Sheep).